Reading from the N-terminus, the 247-residue chain is Carboxy-S-adenosyl-L-methionine synthase (247 aa).

Residues Tyr-39, Gly-64–Ser-66, Asp-89–Asn-90, Asp-117–Ile-118, Asn-132, and Arg-199 contribute to the S-adenosyl-L-methionine site.

It belongs to the class I-like SAM-binding methyltransferase superfamily. Cx-SAM synthase family. Homodimer.

The enzyme catalyses prephenate + S-adenosyl-L-methionine = carboxy-S-adenosyl-L-methionine + 3-phenylpyruvate + H2O. Catalyzes the conversion of S-adenosyl-L-methionine (SAM) to carboxy-S-adenosyl-L-methionine (Cx-SAM). The protein is Carboxy-S-adenosyl-L-methionine synthase of Salmonella paratyphi B (strain ATCC BAA-1250 / SPB7).